We begin with the raw amino-acid sequence, 339 residues long: D-erythrose-4-phosphate dehydrogenase (339 aa).

12 to 13 (RI) is a binding site for NAD(+). Substrate is bound by residues 154-156 (SCT), R200, 213-214 (TK), and R236. C155 (nucleophile) is an active-site residue. N318 is a binding site for NAD(+).

Belongs to the glyceraldehyde-3-phosphate dehydrogenase family. Epd subfamily. In terms of assembly, homotetramer.

Its subcellular location is the cytoplasm. The enzyme catalyses D-erythrose 4-phosphate + NAD(+) + H2O = 4-phospho-D-erythronate + NADH + 2 H(+). Its pathway is cofactor biosynthesis; pyridoxine 5'-phosphate biosynthesis; pyridoxine 5'-phosphate from D-erythrose 4-phosphate: step 1/5. In terms of biological role, catalyzes the NAD-dependent conversion of D-erythrose 4-phosphate to 4-phosphoerythronate. This chain is D-erythrose-4-phosphate dehydrogenase, found in Enterobacter sp. (strain 638).